Consider the following 348-residue polypeptide: Alcohol dehydrogenase 2 (348 aa).

Residues cysteine 44, histidine 67, cysteine 98, cysteine 101, cysteine 104, cysteine 112, and cysteine 154 each contribute to the Zn(2+) site. NAD(+) contacts are provided by residues 178–184 (GAAGGLG), aspartate 202, lysine 207, 269–271 (VGL), and arginine 341.

The protein belongs to the zinc-containing alcohol dehydrogenase family. As to quaternary structure, homotetramer. Zn(2+) serves as cofactor.

Its subcellular location is the cytoplasm. The catalysed reaction is a primary alcohol + NAD(+) = an aldehyde + NADH + H(+). It catalyses the reaction a secondary alcohol + NAD(+) = a ketone + NADH + H(+). In Candida albicans (strain SC5314 / ATCC MYA-2876) (Yeast), this protein is Alcohol dehydrogenase 2 (ADH2).